The following is a 143-amino-acid chain: Large ribosomal subunit protein uL11 (143 aa).

This sequence belongs to the universal ribosomal protein uL11 family. As to quaternary structure, part of the ribosomal stalk of the 50S ribosomal subunit. Interacts with L10 and the large rRNA to form the base of the stalk. L10 forms an elongated spine to which L12 dimers bind in a sequential fashion forming a multimeric L10(L12)X complex. One or more lysine residues are methylated.

In terms of biological role, forms part of the ribosomal stalk which helps the ribosome interact with GTP-bound translation factors. This is Large ribosomal subunit protein uL11 from Nitrosomonas eutropha (strain DSM 101675 / C91 / Nm57).